The sequence spans 336 residues: HTH-type transcriptional regulator CdhR (336 aa).

The 99-residue stretch at Val213–Val311 folds into the HTH araC/xylS-type domain. 2 DNA-binding regions (H-T-H motif) span residues Leu230–Leu251 and Val278–Phe301. The tract at residues Pro305–Gly336 is disordered.

Induces the transcription of the PA5384-PA5388 operon in response to carnitine. This operon is involved in the degradation of L-carnitine, and allows P.aeruginosa to grow on L-carnitine as the sole source of carbon and nitrogen. This is HTH-type transcriptional regulator CdhR (cdhR) from Pseudomonas aeruginosa (strain ATCC 15692 / DSM 22644 / CIP 104116 / JCM 14847 / LMG 12228 / 1C / PRS 101 / PAO1).